The following is a 309-amino-acid chain: 4-diphosphocytidyl-2-C-methyl-D-erythritol kinase (309 aa).

Lysine 11 is a catalytic residue. ATP is bound at residue 94–104 (PVAAGLAGGSA). Aspartate 136 is an active-site residue.

It belongs to the GHMP kinase family. IspE subfamily.

The catalysed reaction is 4-CDP-2-C-methyl-D-erythritol + ATP = 4-CDP-2-C-methyl-D-erythritol 2-phosphate + ADP + H(+). Its pathway is isoprenoid biosynthesis; isopentenyl diphosphate biosynthesis via DXP pathway; isopentenyl diphosphate from 1-deoxy-D-xylulose 5-phosphate: step 3/6. In terms of biological role, catalyzes the phosphorylation of the position 2 hydroxy group of 4-diphosphocytidyl-2C-methyl-D-erythritol. The chain is 4-diphosphocytidyl-2-C-methyl-D-erythritol kinase from Synechococcus sp. (strain JA-3-3Ab) (Cyanobacteria bacterium Yellowstone A-Prime).